Consider the following 664-residue polypeptide: Exoribonuclease 2 (664 aa).

The region spanning Arg-193–Ile-521 is the RNB domain. Positions Gln-568 to Thr-650 constitute an S1 motif domain.

The protein belongs to the RNR ribonuclease family. RNase II subfamily.

Its subcellular location is the cytoplasm. The enzyme catalyses Exonucleolytic cleavage in the 3'- to 5'-direction to yield nucleoside 5'-phosphates.. In terms of biological role, involved in mRNA degradation. Hydrolyzes single-stranded polyribonucleotides processively in the 3' to 5' direction. This chain is Exoribonuclease 2, found in Vibrio vulnificus (strain CMCP6).